Reading from the N-terminus, the 511-residue chain is Maturase K (511 aa).

Belongs to the intron maturase 2 family. MatK subfamily.

The protein localises to the plastid. Its subcellular location is the chloroplast. Its function is as follows. Usually encoded in the trnK tRNA gene intron. Probably assists in splicing its own and other chloroplast group II introns. This chain is Maturase K, found in Anchomanes difformis (Amorphophallus difformis).